Reading from the N-terminus, the 98-residue chain is MVWHGFLAKAVPTVVTGAVGVAAYEALRKMVVKAPLRAATVSVAAWGIRLAREAERKAGESAEQARLMFADVLAEASERAGEEVPPLAVAGSDDGHDH.

Positions 77 to 98 (SERAGEEVPPLAVAGSDDGHDH) are disordered.

It to M.tuberculosis Rv1991c and Rv3269.

This is an uncharacterized protein from Mycobacterium bovis (strain ATCC BAA-935 / AF2122/97).